The sequence spans 407 residues: Putative D-cysteine desulfhydrase 2, mitochondrial (407 aa).

The N-terminal 34 residues, 1 to 34 (MRPSPALAGGGRTVANLLSATEWMLPSPATQVHT), are a transit peptide targeting the mitochondrion. Residues 39–72 (PSHSPPSPPHHFAFSNLTTAPKRNGGKGEEEGRP) are disordered. Lys90 is modified (N6-(pyridoxal phosphate)lysine).

This sequence belongs to the ACC deaminase/D-cysteine desulfhydrase family. Requires pyridoxal 5'-phosphate as cofactor.

It localises to the mitochondrion. It catalyses the reaction D-cysteine + H2O = hydrogen sulfide + pyruvate + NH4(+) + H(+). In terms of biological role, catalyzes the production of hydrogen sulfide (H2S) from cysteine. This Oryza sativa subsp. japonica (Rice) protein is Putative D-cysteine desulfhydrase 2, mitochondrial.